Reading from the N-terminus, the 459-residue chain is cAMP-dependent protein kinase regulatory subunit (459 aa).

Positions 30-219 (QFCANYFNTK…TLANNLKNNF (190 aa)) are dimerization and phosphorylation. 2 disordered regions span residues 78–109 (VNDR…DTKT) and 125–168 (FDVK…PSSK). The span at 95-109 (HSNHDEDPHAKDTKT) shows a compositional bias: basic and acidic residues. Positions 146–168 (KPSSSSQPNQQSASASSKTPSSK) are enriched in low complexity. Ser-180 is subject to Phosphoserine. Residues 220-335 (LFKQ…FLKD), Glu-285, Arg-294, 338-454 (VLKS…KSQD), Glu-404, and Arg-413 each bind 3',5'-cyclic AMP.

This sequence belongs to the cAMP-dependent kinase regulatory chain family. In terms of assembly, tetramer, composed of 2 regulatory (R) and 2 catalytic (C) subunits. In the presence of cAMP it dissociates into 2 active monomeric C subunits and an R dimer.

This is cAMP-dependent protein kinase regulatory subunit (BCY1) from Candida albicans (strain SC5314 / ATCC MYA-2876) (Yeast).